We begin with the raw amino-acid sequence, 428 residues long: Immunoglobulin superfamily containing leucine-rich repeat protein (428 aa).

Residues 1 to 18 (MQELHLLWWALLLGLAQA) form the signal peptide. The LRRNT domain occupies 19 to 50 (CPEPCDCGEKYGFQIADCAYRDLESVPPGFPA). The N-linked (GlcNAc...) asparagine glycan is linked to Asn-51. LRR repeat units lie at residues 51–72 (NVTTLSLSANRLPGLPEGAFRE), 75–96 (LLQSLWLAHNEIRTVAAGALAS), 99–122 (HLKSLDLSHNLISDFAWSDLHNLS), 123–144 (ALQLLKMDSNELTFIPRDAFRS), and 147–168 (ALRSLQLNHNRLHTLAEGTFTP). Positions 180–231 (NPFDCTCGIVWLKTWALTTAVSIPEQDNIACTSPHVLKGTPLSRLPPLPCSA) constitute an LRRCT domain. Positions 232–343 (PSVQLSYQPS…GSAESSVDVA (112 aa)) constitute an Ig-like domain. A disulfide bond links Cys-257 and Cys-327. N-linked (GlcNAc...) asparagine glycosylation is present at Asn-309.

As to expression, expressed in various tissues including retina, heart, skeletal muscle, prostate, ovary, small intestine, thyroid, adrenal cortex, testis, stomach and spinal cord.

It is found in the secreted. The sequence is that of Immunoglobulin superfamily containing leucine-rich repeat protein (ISLR) from Homo sapiens (Human).